Consider the following 85-residue polypeptide: Large ribosomal subunit protein eL43 (85 aa).

The C4-type zinc finger occupies 38–59 (CPVCGRKAVRRISTGIWQCQKC).

Belongs to the eukaryotic ribosomal protein eL43 family. The cofactor is Zn(2+).

The protein is Large ribosomal subunit protein eL43 of Thermococcus sibiricus (strain DSM 12597 / MM 739).